We begin with the raw amino-acid sequence, 216 residues long: Large ribosomal subunit protein uL3 (216 aa).

The segment covering 133–145 (GRATHGNSRSHNV) has biased composition (polar residues). Residues 133–153 (GRATHGNSRSHNVPGSIGMAQ) are disordered. Gln153 is modified (N5-methylglutamine).

It belongs to the universal ribosomal protein uL3 family. Part of the 50S ribosomal subunit. Forms a cluster with proteins L14 and L19. Methylated by PrmB.

In terms of biological role, one of the primary rRNA binding proteins, it binds directly near the 3'-end of the 23S rRNA, where it nucleates assembly of the 50S subunit. The polypeptide is Large ribosomal subunit protein uL3 (Burkholderia cenocepacia (strain ATCC BAA-245 / DSM 16553 / LMG 16656 / NCTC 13227 / J2315 / CF5610) (Burkholderia cepacia (strain J2315))).